A 320-amino-acid chain; its full sequence is Probable movement protein (320 aa).

Catalysis depends on residues histidine 144, aspartate 171, and serine 199. Disordered regions lie at residues 251–270 (RRSRSISAKRGPNSRVQEKR) and 286–320 (EFGRRASASEAPPGRSISMEDSHRPGKGTSDGSSP).

This sequence belongs to the tobamoviruses movement protein family.

In terms of biological role, may play a role in virus cell to cell movement by increasing the size exclusion limit of plasmodesmata and forming a complex with viral RNA to assist its movement. May also have a papain-like protease activity and cleave the genome polyprotein. The chain is Probable movement protein from Malus sylvestris (European crab apple).